The following is a 250-amino-acid chain: MKIDIIGDVHGCLEELEELLFKLGYQIKNGTYQHSNNRQIVFVGDITDRGPDSIKVIKLVYQLVKEKLAYYIPGNHCNKLYRFFQGNKVMEKHGLETTTAEYRSLSKEKQNNIKHKFIELYERSPLYLHLKNINVIIAHAGIPEHLIGKKDKRTKTFVLYGDITGEFDTTGKPIRRDWAKHYHGDSWIVYGHTPVLEPRVVNHTINIDTGCVFGNKLTAYRFPEKEFVSVASRQPFIAEKFTDFNVSNEH.

The protein belongs to the PrpE family. The cofactor is Ni(2+).

The catalysed reaction is P(1),P(4)-bis(5'-guanosyl) tetraphosphate + H2O = GMP + GTP + 2 H(+). Its function is as follows. Asymmetrically hydrolyzes Ap4p to yield AMP and ATP. The polypeptide is Bis(5'-nucleosyl)-tetraphosphatase PrpE [asymmetrical] (Oceanobacillus iheyensis (strain DSM 14371 / CIP 107618 / JCM 11309 / KCTC 3954 / HTE831)).